The following is a 206-amino-acid chain: Proteasome subunit beta 1 (206 aa).

The propeptide at 1–14 is removed in mature form; by autocatalysis; it reads MSRIHNDPKVLLTG. Catalysis depends on Thr-15, which acts as the Nucleophile.

It belongs to the peptidase T1B family. In terms of assembly, the 20S proteasome core is composed of 14 alpha and 14 beta subunits that assemble into four stacked heptameric rings, resulting in a barrel-shaped structure. The two inner rings, each composed of seven catalytic beta subunits, are sandwiched by two outer rings, each composed of seven alpha subunits. The catalytic chamber with the active sites is on the inside of the barrel. Has a gated structure, the ends of the cylinder being occluded by the N-termini of the alpha-subunits. Is capped at one or both ends by the proteasome regulatory ATPase, PAN.

It is found in the cytoplasm. The catalysed reaction is Cleavage of peptide bonds with very broad specificity.. The formation of the proteasomal ATPase PAN-20S proteasome complex, via the docking of the C-termini of PAN into the intersubunit pockets in the alpha-rings, triggers opening of the gate for substrate entry. Interconversion between the open-gate and close-gate conformations leads to a dynamic regulation of the 20S proteasome proteolysis activity. In terms of biological role, component of the proteasome core, a large protease complex with broad specificity involved in protein degradation. The polypeptide is Proteasome subunit beta 1 (Caldivirga maquilingensis (strain ATCC 700844 / DSM 13496 / JCM 10307 / IC-167)).